A 423-amino-acid chain; its full sequence is Core protease OPG083 (423 aa).

Residues histidine 241, aspartate 248, and cysteine 328 contribute to the active site.

The protein belongs to the peptidase C57 family.

It localises to the virion. In terms of biological role, late protein responsible for processing most or all of the viral core and membrane proteins known to undergo morphogenesis-associated proteolysis. These proteolytic events are involved in the transformation of immature virions (IV) into mature virions (MV). Probably cleaves at least the OPG129/A3, OPG136/A10, OPG098/L4, and OPG144/A17 precursors preferentially at Ala-Gly-|-Ala motifs. Also seems to process Ala-Gly-|-Ser and Ala-Gly-|-Thr motifs. This is Core protease OPG083 (OPG083) from Bos taurus (Bovine).